The sequence spans 352 residues: Sperm equatorial segment protein 1 (352 aa).

The first 19 residues, 1–19, serve as a signal peptide directing secretion; that stretch reads MKSLVLLVALLLWSSSVPA. Residue asparagine 128 is glycosylated (N-linked (GlcNAc...) asparagine). The segment at 140-203 is disordered; that stretch reads IEKEEPEPEP…TESEDVPQLS (64 aa). Polar residues predominate over residues 166 to 193; the sequence is TESSTSPYVTSYKSPVTTSDRSTGIEIS.

The protein belongs to the SPESP1 family. In terms of processing, glycosylated. In testis there are two predominant forms of 77- and 67-kDa and a form of 47-kDa, whereas in epididymal sperm from caput, corpus, and cauda there are two forms of 47- and 43-kDa. Testis forms contain complex carbohydrate residues. Epididymal sperm forms are N-glycosylated. Then undergoes significant glycosylation in the testis and that the majority of these glycoconjugates are removed by the time sperm reach the caput epididymis.

The protein resides in the cytoplasmic vesicle. It is found in the secretory vesicle. It localises to the acrosome. In terms of biological role, involved in fertilization ability of sperm. The polypeptide is Sperm equatorial segment protein 1 (Macaca fascicularis (Crab-eating macaque)).